We begin with the raw amino-acid sequence, 170 residues long: Orotate phosphoribosyltransferase (170 aa).

5-phospho-alpha-D-ribose 1-diphosphate-binding positions include Arg-86, Lys-87, Lys-90, His-92, and 111–119 (EDVTTSGGS). Positions 115 and 143 each coordinate orotate.

It belongs to the purine/pyrimidine phosphoribosyltransferase family. PyrE subfamily. In terms of assembly, homodimer. Mg(2+) serves as cofactor.

The catalysed reaction is orotidine 5'-phosphate + diphosphate = orotate + 5-phospho-alpha-D-ribose 1-diphosphate. Its pathway is pyrimidine metabolism; UMP biosynthesis via de novo pathway; UMP from orotate: step 1/2. Functionally, catalyzes the transfer of a ribosyl phosphate group from 5-phosphoribose 1-diphosphate to orotate, leading to the formation of orotidine monophosphate (OMP). This is Orotate phosphoribosyltransferase from Methanoculleus marisnigri (strain ATCC 35101 / DSM 1498 / JR1).